The following is a 230-amino-acid chain: Orotidine 5'-phosphate decarboxylase (230 aa).

Residues Asp10, Lys32, 59–68 (DLKYHDIPNT), Thr119, Arg180, Gln189, Gly209, and Arg210 each bind substrate. Lys61 serves as the catalytic Proton donor.

This sequence belongs to the OMP decarboxylase family. Type 1 subfamily. In terms of assembly, homodimer.

It carries out the reaction orotidine 5'-phosphate + H(+) = UMP + CO2. It functions in the pathway pyrimidine metabolism; UMP biosynthesis via de novo pathway; UMP from orotate: step 2/2. Its function is as follows. Catalyzes the decarboxylation of orotidine 5'-monophosphate (OMP) to uridine 5'-monophosphate (UMP). This Glaesserella parasuis serovar 5 (strain SH0165) (Haemophilus parasuis) protein is Orotidine 5'-phosphate decarboxylase.